Reading from the N-terminus, the 878-residue chain is Alanine--tRNA ligase (878 aa).

Residues His566, His570, Cys668, and His672 each coordinate Zn(2+).

Belongs to the class-II aminoacyl-tRNA synthetase family. Zn(2+) serves as cofactor.

It is found in the cytoplasm. It catalyses the reaction tRNA(Ala) + L-alanine + ATP = L-alanyl-tRNA(Ala) + AMP + diphosphate. Functionally, catalyzes the attachment of alanine to tRNA(Ala) in a two-step reaction: alanine is first activated by ATP to form Ala-AMP and then transferred to the acceptor end of tRNA(Ala). Also edits incorrectly charged Ser-tRNA(Ala) and Gly-tRNA(Ala) via its editing domain. The chain is Alanine--tRNA ligase from Bacillus velezensis (strain DSM 23117 / BGSC 10A6 / LMG 26770 / FZB42) (Bacillus amyloliquefaciens subsp. plantarum).